The chain runs to 332 residues: Methylthioribose-1-phosphate isomerase (332 aa).

Substrate contacts are provided by residues 44 to 46, arginine 87, and glutamine 192; that span reads RGA. Aspartate 233 functions as the Proton donor in the catalytic mechanism. 243-244 contributes to the substrate binding site; that stretch reads NK.

Belongs to the eIF-2B alpha/beta/delta subunits family. MtnA subfamily.

It carries out the reaction 5-(methylsulfanyl)-alpha-D-ribose 1-phosphate = 5-(methylsulfanyl)-D-ribulose 1-phosphate. It functions in the pathway amino-acid biosynthesis; L-methionine biosynthesis via salvage pathway; L-methionine from S-methyl-5-thio-alpha-D-ribose 1-phosphate: step 1/6. In terms of biological role, catalyzes the interconversion of methylthioribose-1-phosphate (MTR-1-P) into methylthioribulose-1-phosphate (MTRu-1-P). The chain is Methylthioribose-1-phosphate isomerase from Dehalococcoides mccartyi (strain ATCC BAA-2100 / JCM 16839 / KCTC 5957 / BAV1).